The following is a 490-amino-acid chain: AP-5 complex subunit mu-1 (490 aa).

The region spanning Lys-206–Asn-476 is the MHD domain.

Belongs to the adaptor complexes medium subunit family. Probably part of the adaptor protein complex 5 (AP-5) a tetramer composed of AP5B1, AP5M1, AP5S1 and AP5Z1.

It is found in the cytoplasm. It localises to the cytosol. The protein resides in the late endosome membrane. Its subcellular location is the lysosome membrane. As part of AP-5, a probable fifth adaptor protein complex it may be involved in endosomal transport. This chain is AP-5 complex subunit mu-1 (AP5M1), found in Bos taurus (Bovine).